Consider the following 445-residue polypeptide: E3 ubiquitin-protein ligase MYLIP (445 aa).

One can recognise an FERM domain in the interval M1–T279. Fe cation is bound by residues C360, C363, and C368. Residues C387–R422 form an RING-type zinc finger. Positions V431–L433 are critical for homodimerization.

Homodimer. Interacts with the E2 ubiquitin-conjugating enzyme, UBE2D1 (via RING-type zinc finger). Interacts with myosin regulatory light chain (MRLC) and TMEM4. Post-translationally, autoubiquitinated. Ubiquitously expressed.

It localises to the cytoplasm. The protein localises to the cell membrane. It carries out the reaction S-ubiquitinyl-[E2 ubiquitin-conjugating enzyme]-L-cysteine + [acceptor protein]-L-lysine = [E2 ubiquitin-conjugating enzyme]-L-cysteine + N(6)-ubiquitinyl-[acceptor protein]-L-lysine.. The protein operates within protein modification; protein ubiquitination. Can bind 1 iron ion per dimer. Iron binding seems to decrease LDLR degradation activity. In terms of biological role, E3 ubiquitin-protein ligase that mediates ubiquitination and subsequent proteasomal degradation of myosin regulatory light chain (MRLC), LDLR, VLDLR and LRP8. Activity depends on E2 enzymes of the UBE2D family. Proteasomal degradation of MRLC leads to inhibit neurite outgrowth in presence of NGF by counteracting the stabilization of MRLC by saposin-like protein (CNPY2/MSAP) and reducing CNPY2-stimulated neurite outgrowth. Acts as a sterol-dependent inhibitor of cellular cholesterol uptake by mediating ubiquitination and subsequent degradation of LDLR. In Homo sapiens (Human), this protein is E3 ubiquitin-protein ligase MYLIP (MYLIP).